The sequence spans 168 residues: Small ribosomal subunit protein uS5 (168 aa).

An S5 DRBM domain is found at 11–74; the sequence is YSEKVVKIDR…EAAKKHLVKI (64 aa).

This sequence belongs to the universal ribosomal protein uS5 family. As to quaternary structure, part of the 30S ribosomal subunit. Contacts proteins S4 and S8.

Its function is as follows. With S4 and S12 plays an important role in translational accuracy. Functionally, located at the back of the 30S subunit body where it stabilizes the conformation of the head with respect to the body. The chain is Small ribosomal subunit protein uS5 from Leptospira borgpetersenii serovar Hardjo-bovis (strain JB197).